We begin with the raw amino-acid sequence, 161 residues long: MKYDTSDLCDIYHEEVNVVEPLFSNFGGRTSFGGKITTVKCFEDNGLLFDLLEENGLGRVLVVDGGGSVRRALINAELAELALKNEWEGIVVYGAVRQVDDLAELDIGIQAMAAIPVGAADEGVGESDIRVNFGGVTFFSGDHLYADNTGIILSEDPLDIE.

Belongs to the RraA family. Homotrimer. Binds to both RNA-binding sites in the C-terminal region of Rne and to RhlB.

It localises to the cytoplasm. Globally modulates RNA abundance by binding to RNase E (Rne) and regulating its endonucleolytic activity. Can modulate Rne action in a substrate-dependent manner by altering the composition of the degradosome. Modulates RNA-binding and helicase activities of the degradosome. The protein is Regulator of ribonuclease activity A of Yersinia pseudotuberculosis serotype O:1b (strain IP 31758).